The primary structure comprises 829 residues: Leucine--tRNA ligase (829 aa).

Positions 40 to 50 match the 'HIGH' region motif; that stretch reads PYPSGNIHMGH. The 'KMSKS' region motif lies at 594–598; the sequence is KMSKS. Lys597 serves as a coordination point for ATP.

The protein belongs to the class-I aminoacyl-tRNA synthetase family.

The protein resides in the cytoplasm. It catalyses the reaction tRNA(Leu) + L-leucine + ATP = L-leucyl-tRNA(Leu) + AMP + diphosphate. In Anaplasma marginale (strain St. Maries), this protein is Leucine--tRNA ligase.